Here is a 747-residue protein sequence, read N- to C-terminus: Putative ankyrin repeat protein FPV222 (747 aa).

ANK repeat units follow at residues 38–67, 103–132, 136–165, 169–198, 202–231, 234–263, 294–323, 328–357, 361–393, 397–426, 430–460, 464–493, 495–524, and 529–559; these read DNCT…DPNI, NYRN…LVNM, KNIT…NTNA, YGET…NVNV, DSIT…DTNA, LERF…NTNV, PCTV…NPDI, TSTY…YTDV, QQNT…SFNL, KGRT…DTNI, MSFT…DPNL, KEVS…DIKP, NECY…ELEV, and DHYV…DLNK.

The polypeptide is Putative ankyrin repeat protein FPV222 (Vertebrata (FPV)).